Here is a 309-residue protein sequence, read N- to C-terminus: Probable manganese-dependent inorganic pyrophosphatase (309 aa).

Residues H9, D13, D15, D75, H97, and D149 each contribute to the Mn(2+) site.

Belongs to the PPase class C family. Mn(2+) is required as a cofactor.

It localises to the cytoplasm. The catalysed reaction is diphosphate + H2O = 2 phosphate + H(+). This chain is Probable manganese-dependent inorganic pyrophosphatase, found in Bacillus cereus (strain ATCC 10987 / NRS 248).